The primary structure comprises 263 residues: N-acetylgalactosamine permease IID component (263 aa).

The region spanning serine 3–leucine 263 is the PTS EIID domain. The next 6 membrane-spanning stretches (helical) occupy residues leucine 61–methionine 81, leucine 98–methionine 118, leucine 131–tryptophan 151, threonine 178–valine 198, phenylalanine 215–phenylalanine 235, and proline 243–leucine 263.

It is found in the cell inner membrane. The phosphoenolpyruvate-dependent sugar phosphotransferase system (PTS), a major carbohydrate active -transport system, catalyzes the phosphorylation of incoming sugar substrates concomitant with their translocation across the cell membrane. This system is involved in N-acetylgalactosamine transport. In Escherichia coli (strain K12), this protein is N-acetylgalactosamine permease IID component (agaD).